The sequence spans 779 residues: Protein WEAK CHLOROPLAST MOVEMENT UNDER BLUE LIGHT-like 1 (779 aa).

The disordered stretch occupies residues 1 to 119 (MEDLKTTDAL…NAVSPRPLYS (119 aa)). The segment covering 79-88 (DSPTTPSFVS) has biased composition (polar residues). Ser139 is subject to Phosphoserine. Coiled coils occupy residues 182 to 503 (RMKV…KQRE), 532 to 587 (KETR…ESRL), and 657 to 715 (AVSE…KWRE). Low complexity predominate over residues 650–661 (ANARVAAAVSEV). 2 disordered regions span residues 650–674 (ANAR…SLEK) and 694–759 (EKAE…NPVK). Composition is skewed to basic and acidic residues over residues 662–674 (GEAK…SLEK) and 694–718 (EKAE…EVSE). The segment covering 741–753 (TSVSNETETNPIP) has biased composition (polar residues).

This sequence belongs to the WEB family.

This is Protein WEAK CHLOROPLAST MOVEMENT UNDER BLUE LIGHT-like 1 (WEL1) from Arabidopsis thaliana (Mouse-ear cress).